The following is a 517-amino-acid chain: Nuclear receptor subfamily 5 group A member 2 (517 aa).

A DNA-binding region (nuclear receptor) is located at residues 43–118 (DEMCPVCGDK…VGMKLEAVRA (76 aa)). Zn(2+) is bound by residues Cys-46, Cys-49, Cys-63, Cys-66, Cys-82, Cys-88, Cys-98, and Cys-101. 2 consecutive NR C4-type zinc fingers follow at residues 46 to 66 (CPVC…CESC) and 82 to 101 (CIEN…CPYC). The interval 112–127 (KLEAVRADRMRGGRNK) is C-terminal extension (CTE). Positions 128–147 (FGPMYKRDRALKQQKKALIR) match the FTZ-F1 box motif. Residues 182-211 (GLPLSHHHHHHHHHHHHSSSSAGLPPADFD) are disordered. The segment covering 186-199 (SHHHHHHHHHHHHS) has biased composition (basic residues). Positions 276–515 (SFPHLVVELL…NLLIEMLHAK (240 aa)) constitute an NR LBD domain. Residues 397–400 (GATL), Tyr-492, and Lys-496 contribute to the a phospholipid derivative site. The tract at residues 504-515 (CNNLLIEMLHAK) is AF-2.

It belongs to the nuclear hormone receptor family. NR5 subfamily. In terms of assembly, monomer; Binds DNA as a monomer.

Its subcellular location is the nucleus. The protein localises to the chromosome. Its function is as follows. Orphan nuclear receptor that binds DNA as a monomer to the 5'-TCAAGGCCA-3' sequence and controls expression of target genes: regulates key biological processes, such as cholesterol and bile acid synthesis pathways, as well as cartilage, liver and pancreas morphogenesis. Ligand-binding causes conformational change which causes recruitment of coactivators, promoting target gene activation. The specific ligand is unknown, but specific phospholipids, such as phosphatidylethanolamine, phosphatidylserine, dilauroyl phosphatidylcholine and diundecanoyl phosphatidylcholine can act as ligand in vitro. Acts as a pioneer transcription factor, which unwraps target DNA from histones and elicits local opening of closed chromatin. Involved in the formation of connective tissue in lower jaw. In terms of biological role, lacks transcription factor activity; unable to activate expression of target genes. The chain is Nuclear receptor subfamily 5 group A member 2 from Danio rerio (Zebrafish).